The chain runs to 210 residues: Uridine kinase (210 aa).

ATP is bound at residue 13–20; it reads GGSGSGKT.

Belongs to the uridine kinase family.

The protein resides in the cytoplasm. The enzyme catalyses uridine + ATP = UMP + ADP + H(+). It carries out the reaction cytidine + ATP = CMP + ADP + H(+). It functions in the pathway pyrimidine metabolism; CTP biosynthesis via salvage pathway; CTP from cytidine: step 1/3. It participates in pyrimidine metabolism; UMP biosynthesis via salvage pathway; UMP from uridine: step 1/1. The chain is Uridine kinase from Oceanobacillus iheyensis (strain DSM 14371 / CIP 107618 / JCM 11309 / KCTC 3954 / HTE831).